A 64-amino-acid chain; its full sequence is Kappa-lycotoxin-Os1a (64 aa).

4 disulfides stabilise this stretch: cysteine 10-cysteine 26, cysteine 17-cysteine 56, cysteine 19-cysteine 42, and cysteine 28-cysteine 40.

It belongs to the neurotoxin 04 (omega-agtx) family. 01 (type I omega-agtx) subfamily. As to expression, expressed by the venom gland.

It is found in the secreted. Functionally, insecticidal to house crickets. It induces an excitatory slow-onset impact that leads to irreversible spastic paralysis. It also modifies human voltage-gated potassium channel Kv1.5/KCNA5. Most likely, it binds to the voltage-sensing domain of the channel, suggesting it does not block the pore but prevents its opening at physiological membrane potentials. The recombinant peptide binds to the channel in an irreversible manner and slows down the hKv1.5 current activation kinetics. It is not toxic to mice, when intracranially injected (at 0.5 ug/g mouse). The sequence is that of Kappa-lycotoxin-Os1a from Oculicosa supermirabilis (Central Asian wolf-spider).